The primary structure comprises 346 residues: Tryptophan--tRNA ligase (346 aa).

ATP-binding positions include 21-23 and 30-31; these read QPT and GN. Positions 22–31 match the 'HIGH' region motif; that stretch reads PTADSYHLGN. D147 contributes to the L-tryptophan binding site. ATP is bound by residues 159 to 161, I198, and 207 to 211; these read GED and KMSKS. Positions 207–211 match the 'KMSKS' region motif; the sequence is KMSKS.

Belongs to the class-I aminoacyl-tRNA synthetase family. In terms of assembly, homodimer.

It localises to the cytoplasm. The catalysed reaction is tRNA(Trp) + L-tryptophan + ATP = L-tryptophyl-tRNA(Trp) + AMP + diphosphate + H(+). Functionally, catalyzes the attachment of tryptophan to tRNA(Trp). In Corynebacterium efficiens (strain DSM 44549 / YS-314 / AJ 12310 / JCM 11189 / NBRC 100395), this protein is Tryptophan--tRNA ligase.